The following is a 379-amino-acid chain: tRNA-specific 2-thiouridylase MnmA (379 aa).

Residues 23–30 and L49 each bind ATP; that span reads AMSGGVDS. C117 serves as the catalytic Nucleophile. An intrachain disulfide couples C117 to C214. G141 serves as a coordination point for ATP. The segment at 163–165 is interaction with tRNA; it reads RDQ. Catalysis depends on C214, which acts as the Cysteine persulfide intermediate.

This sequence belongs to the MnmA/TRMU family.

It localises to the cytoplasm. It carries out the reaction S-sulfanyl-L-cysteinyl-[protein] + uridine(34) in tRNA + AH2 + ATP = 2-thiouridine(34) in tRNA + L-cysteinyl-[protein] + A + AMP + diphosphate + H(+). Functionally, catalyzes the 2-thiolation of uridine at the wobble position (U34) of tRNA, leading to the formation of s(2)U34. The polypeptide is tRNA-specific 2-thiouridylase MnmA (Cereibacter sphaeroides (strain ATCC 17029 / ATH 2.4.9) (Rhodobacter sphaeroides)).